The chain runs to 523 residues: GMP synthase [glutamine-hydrolyzing] (523 aa).

One can recognise a Glutamine amidotransferase type-1 domain in the interval 18–208; the sequence is KILIVDFGGQ…LYNVCGAKGD (191 aa). Cysteine 95 acts as the Nucleophile in catalysis. Catalysis depends on residues histidine 182 and glutamate 184. The GMPS ATP-PPase domain occupies 209 to 398; it reads WNMKSFLAEA…LGLPDYLVHR (190 aa). 236-242 contributes to the ATP binding site; the sequence is SGGVDSS.

Homodimer.

The enzyme catalyses XMP + L-glutamine + ATP + H2O = GMP + L-glutamate + AMP + diphosphate + 2 H(+). Its pathway is purine metabolism; GMP biosynthesis; GMP from XMP (L-Gln route): step 1/1. Catalyzes the synthesis of GMP from XMP. The chain is GMP synthase [glutamine-hydrolyzing] from Treponema denticola (strain ATCC 35405 / DSM 14222 / CIP 103919 / JCM 8153 / KCTC 15104).